Consider the following 346-residue polypeptide: D-alanine--D-alanine ligase (346 aa).

The 195-residue stretch at 133–327 folds into the ATP-grasp domain; the sequence is KLYAKSVGVK…TLADQIPLEK (195 aa). An ATP-binding site is contributed by 159-211; that stretch reads LRFPCIIKPARLGSSIGISIVKDEKDLEYAKDVGFEFDNDLVVEEFKNNIKEY. 3 residues coordinate Mg(2+): aspartate 284, glutamate 296, and asparagine 298.

This sequence belongs to the D-alanine--D-alanine ligase family. The cofactor is Mg(2+). Mn(2+) serves as cofactor.

It is found in the cytoplasm. The enzyme catalyses 2 D-alanine + ATP = D-alanyl-D-alanine + ADP + phosphate + H(+). Its pathway is cell wall biogenesis; peptidoglycan biosynthesis. Its function is as follows. Cell wall formation. The sequence is that of D-alanine--D-alanine ligase from Campylobacter jejuni subsp. doylei (strain ATCC BAA-1458 / RM4099 / 269.97).